We begin with the raw amino-acid sequence, 284 residues long: 4-diphosphocytidyl-2-C-methyl-D-erythritol kinase (284 aa).

Residue Lys14 is part of the active site. 98–108 (PMGGGLGGGSS) provides a ligand contact to ATP. Asp140 is a catalytic residue.

Belongs to the GHMP kinase family. IspE subfamily.

The enzyme catalyses 4-CDP-2-C-methyl-D-erythritol + ATP = 4-CDP-2-C-methyl-D-erythritol 2-phosphate + ADP + H(+). The protein operates within isoprenoid biosynthesis; isopentenyl diphosphate biosynthesis via DXP pathway; isopentenyl diphosphate from 1-deoxy-D-xylulose 5-phosphate: step 3/6. Functionally, catalyzes the phosphorylation of the position 2 hydroxy group of 4-diphosphocytidyl-2C-methyl-D-erythritol. The polypeptide is 4-diphosphocytidyl-2-C-methyl-D-erythritol kinase (Shewanella sp. (strain MR-7)).